The sequence spans 455 residues: Membrane protein Pbs54 (455 aa).

Residues 12–32 (IISIIILILRISLFSCAEHLF) form a helical membrane-spanning segment. N-linked (GlcNAc...) asparagine glycosylation is found at Asn-41, Asn-102, and Asn-125. 6 helical membrane passes run 181-201 (IFLIFLISYMYWFCIKILFNG), 220-240 (FIFFVILKISLIFLPAILSCI), 244-264 (ILTFYFYSISMSPCKDIFYLF), 285-305 (ILIGNVIYNFLCPPKIIIIFI), 312-332 (FLVKIICLTIILFISFLIFFL), and 346-366 (FVFSFTSSYLIVSCFAYFWNI). The N-linked (GlcNAc...) asparagine glycan is linked to Asn-373. A helical membrane pass occupies residues 398 to 418 (NMFALFMIFAMSILSIIFPRI).

Its subcellular location is the cell projection. It localises to the cilium. It is found in the flagellum. The protein resides in the cell membrane. Functionally, plays a role in gamete fertilization. Required for the successful transmission of parasites to mosquito. This chain is Membrane protein Pbs54, found in Plasmodium berghei (strain Anka).